A 67-amino-acid polypeptide reads, in one-letter code: Large ribosomal subunit protein bL31 (67 aa).

The protein belongs to the bacterial ribosomal protein bL31 family. Type A subfamily. As to quaternary structure, part of the 50S ribosomal subunit.

In terms of biological role, binds the 23S rRNA. The chain is Large ribosomal subunit protein bL31 from Wolinella succinogenes (strain ATCC 29543 / DSM 1740 / CCUG 13145 / JCM 31913 / LMG 7466 / NCTC 11488 / FDC 602W) (Vibrio succinogenes).